Consider the following 261-residue polypeptide: Peroxiredoxin PRX1, mitochondrial (261 aa).

A mitochondrion-targeting transit peptide spans 1–13 (MFSRICSAQLKRT). The Thioredoxin domain occupies 49–212 (LRINSDAPNF…VLRVIDALQL (164 aa)). Ser53 carries the post-translational modification Phosphoserine. Cys91 acts as the Cysteine sulfenic acid (-SOH) intermediate in catalysis.

The protein belongs to the peroxiredoxin family. Prx6 subfamily. As to quaternary structure, homodimer; disulfide-linked.

Its subcellular location is the mitochondrion. It catalyses the reaction a hydroperoxide + 2 glutathione = an alcohol + glutathione disulfide + H2O. The catalysed reaction is [glutaredoxin]-dithiol + a hydroperoxide = [glutaredoxin]-disulfide + an alcohol + H2O. In terms of biological role, thiol-specific peroxidase that catalyzes the reduction of hydrogen peroxide and organic hydroperoxides to water and alcohols, respectively. Plays a role in cell protection against oxidative stress by detoxifying peroxides and as sensor of hydrogen peroxide-mediated signaling events. Involved in mitochondrial protection of cadmium-induced oxidative stress. The sequence is that of Peroxiredoxin PRX1, mitochondrial from Saccharomyces cerevisiae (strain ATCC 204508 / S288c) (Baker's yeast).